The chain runs to 344 residues: Fibronectin type 3 and ankyrin repeat domains 1 protein (344 aa).

One can recognise a Fibronectin type-III domain in the interval 11 to 108 (KPHPPVVGKV…VVSVATTREP (98 aa)). 6 ANK repeats span residues 109–139 (ISSEHFHRAVSVNDEDLLLRILEGGHVMIDV), 143–172 (FGFTALMVAAQKGYTRLVKILVSNGTDVNL), 176–205 (SGKDSLMLACYAGHLDVVKYLRRHGASWEA), 209–238 (GGCTALHWAADGGHCSVIDWMIKDGCEVDV), 243–273 (SGWTPLMRVSAVTGSQKVASLLIEAGADVNI), and 277–306 (DGKTPLMVAVLNNHEQLVQLLLDKGADATV).

Interacts with COPS5; regulates the phosphorylation of JUN and the transcriptional activity of AP-1. Interacts with RYBP; may prevent the ubiquitin-mediated proteasomal degradation of FANK1. Post-translationally, polyubiquitinated. Polyubiquitination leads to proteasomal degradation. As to expression, mostly restricted to testis (at protein level), including mid to late pachytene spermatocytes (stages VI-X), diplotene spermatocytes (stage XI), meiotically dividing spermatocytes (stage XII) and spermatids in steps 1-14. Highest levels in late pachytene spermatocytes and spermatids in steps 1-9.

It localises to the nucleus. The protein resides in the cytoplasm. The protein localises to the cytosol. Its subcellular location is the cytoskeleton. It is found in the cilium basal body. It localises to the cell projection. The protein resides in the cilium. Through the activation of JUN and AP-1-mediated transcription, may regulate apoptosis. This chain is Fibronectin type 3 and ankyrin repeat domains 1 protein, found in Mus musculus (Mouse).